The following is a 366-amino-acid chain: MTPEHLPTEQYDAQLAEKVARLQSMMAPFSGLVPEVFRSPASHYRMRAEFRLWHDGDDLYHIMFDQQTKSRIRVDSFPAASQLINTLMKAMIAGVRDNHALRHKLFQIDYLTTLSNQAVVSLLYHKKLDEEWREAATALRDALRAQGLNVHLIGRATKTKIELDQDYIDERLPVAGKEMIYRQVENSFTQPNAAMNIQMLEWALEVTKDSKGDLLELYCGNGNFSLALARNFNRVLATEIAKPSVAAAQYNIAANHIDNVQIIRMAAEEFTQAMNGVREFNRLQGIDLKRYQCETIFVDPPRSGLDSETEKMVQAYPRILYISCNPETLCKNLETLSQTHTVSRLALFDQFPYTHHMECGVLLTAK.

Residues Q190, Y218, N223, E239, and D299 each coordinate S-adenosyl-L-methionine. The active-site Nucleophile is the C324. Residue E358 is the Proton acceptor of the active site.

It belongs to the class I-like SAM-binding methyltransferase superfamily. RNA M5U methyltransferase family. TrmA subfamily.

The catalysed reaction is uridine(54) in tRNA + S-adenosyl-L-methionine = 5-methyluridine(54) in tRNA + S-adenosyl-L-homocysteine + H(+). It catalyses the reaction uridine(341) in tmRNA + S-adenosyl-L-methionine = 5-methyluridine(341) in tmRNA + S-adenosyl-L-homocysteine + H(+). Functionally, dual-specificity methyltransferase that catalyzes the formation of 5-methyluridine at position 54 (m5U54) in all tRNAs, and that of position 341 (m5U341) in tmRNA (transfer-mRNA). The chain is tRNA/tmRNA (uracil-C(5))-methyltransferase from Salmonella arizonae (strain ATCC BAA-731 / CDC346-86 / RSK2980).